Consider the following 478-residue polypeptide: Early growth response protein 4 (478 aa).

The tract at residues 275–302 (TEGLPALLTPPGGEGGSGGEGGEFLAAP) is disordered. Gly residues predominate over residues 286 to 296 (GGEGGSGGEGG). 3 consecutive C2H2-type zinc fingers follow at residues 372-396 (FACP…LRIH), 402-424 (FQCR…VRTH), and 430-452 (FACD…SKVH).

It belongs to the EGR C2H2-type zinc-finger protein family.

It localises to the nucleus. In terms of biological role, transcriptional regulator. Recognizes and binds to the DNA sequence 5'-GCGGGGGCG-3' (GSG). Activates the transcription of target genes whose products are required for mitogenesis and differentiation. The sequence is that of Early growth response protein 4 (Egr4) from Mus musculus (Mouse).